A 231-amino-acid polypeptide reads, in one-letter code: Protein HHL1, chloroplastic (231 aa).

The N-terminal 39 residues, 1–39, are a transit peptide targeting the chloroplast; the sequence is MEVSMSLNALTRLPLKNTGRFEEVGLARHSLFSSRTACR. A helical transmembrane segment spans residues 93–113; it reads YLWYPLSIIAGGTTAKIMVAA. The disordered stretch occupies residues 206-231; the sequence is SFGKLSSLNPGSDEKTEETSDEKAKA. The segment covering 217–231 has biased composition (basic and acidic residues); the sequence is SDEKTEETSDEKAKA.

Interacts with psbB, psbC and LQY1, but not with psbA or psbD.

It localises to the plastid. It is found in the chloroplast thylakoid membrane. Functionally, involved in photoprotection. Forms a complex with LQY1 that is involved in the repair and reassembly cycle of the PSII-LHCII supercomplex under high-light conditions. May function in guiding the release of psbC from PSII core monomers. In Arabidopsis thaliana (Mouse-ear cress), this protein is Protein HHL1, chloroplastic.